The chain runs to 468 residues: Zinc transporter SLC39A7 (468 aa).

A helical membrane pass occupies residues 10–30; the sequence is WVAVGLLTWAALGLLVAGHEG. Composition is skewed to basic and acidic residues over residues 36–56 and 64–100; these read RDVE…DFHH and HTHE…DSLH. Residues 36–116 form a disordered region; the sequence is RDVEEDFHGH…SHGASREAGA (81 aa). Residue His64 is modified to Pros-methylhistidine. The next 3 helical transmembrane spans lie at 132-152, 163-183, and 208-228; these read ALGA…LIPV, LQIL…LHLI, and GPIL…LVVE. Positions 237 to 248 are enriched in basic residues; sequence GHGHAHAHGHGH. The segment at 237–313 is disordered; it reads GHGHAHAHGH…NPEEEKTGSD (77 aa). The segment covering 249–312 has biased composition (basic and acidic residues); sequence SHGDSHAHGH…QNPEEEKTGS (64 aa). 3 helical membrane passes run 385–405, 409–429, and 447–467; these read LTAI…GGAV, VAGG…FIYV, and SLLE…IAHL.

It belongs to the ZIP transporter (TC 2.A.5) family. KE4/Catsup subfamily. Homodimer. In terms of processing, rapidly phosphorylated by CK2 following Zn(2+) treatment. This phosphorylation is required for efficient cytosolic Zn(2+) release.

It is found in the endoplasmic reticulum membrane. Its subcellular location is the golgi apparatus. The protein localises to the cis-Golgi network membrane. The catalysed reaction is Zn(2+)(in) = Zn(2+)(out). Its function is as follows. Transports Zn(2+) from the endoplasmic reticulum (ER)/Golgi apparatus to the cytosol, playing an essential role in the regulation of cytosolic zinc levels. Acts as a gatekeeper of zinc release from intracellular stores, requiring post-translational activation by phosphorylation on residues, resulting in activation of multiple downstream pathways leading to cell growth and proliferation. Has an essential role in B cell development and is required for proper B cell receptor signaling. Plays an important role in maintaining intestinal epithelial homeostasis and skin dermis development by regulating ER function. Controls cell signaling pathways involved in glucose metabolism in skeletal muscle. Has a protective role against ER stress in different biological contexts. Mediates Zn(2+)-induced ferroptosis. This Rattus norvegicus (Rat) protein is Zinc transporter SLC39A7.